The primary structure comprises 396 residues: Tryptophan synthase beta chain (396 aa).

Lys86 carries the post-translational modification N6-(pyridoxal phosphate)lysine.

It belongs to the TrpB family. In terms of assembly, tetramer of two alpha and two beta chains. It depends on pyridoxal 5'-phosphate as a cofactor.

It catalyses the reaction (1S,2R)-1-C-(indol-3-yl)glycerol 3-phosphate + L-serine = D-glyceraldehyde 3-phosphate + L-tryptophan + H2O. It participates in amino-acid biosynthesis; L-tryptophan biosynthesis; L-tryptophan from chorismate: step 5/5. Functionally, the beta subunit is responsible for the synthesis of L-tryptophan from indole and L-serine. This Blochmanniella pennsylvanica (strain BPEN) protein is Tryptophan synthase beta chain.